A 200-amino-acid chain; its full sequence is ADP-ribosylation factor-like protein 4D (200 aa).

Gly2 carries N-myristoyl glycine lipidation. GTP-binding positions include 27 to 34 (GLDSAGKT), 75 to 79 (DVGGQ), and 134 to 137 (NKQD).

This sequence belongs to the small GTPase superfamily. Arf family. As to quaternary structure, interacts with CYTH2; the interaction is direct and ARL4D GTP-dependent. Does not interact with ARL4D.

It localises to the nucleus. It is found in the nucleolus. Its subcellular location is the cell membrane. The protein localises to the cytoplasm. Functionally, small GTP-binding protein which cycles between an inactive GDP-bound and an active GTP-bound form, and the rate of cycling is regulated by guanine nucleotide exchange factors (GEF) and GTPase-activating proteins (GAP). GTP-binding protein that does not act as an allosteric activator of the cholera toxin catalytic subunit. Recruits CYTH1, CYTH2, CYTH3 and CYTH4 to the plasma membrane in GDP-bound form. This is ADP-ribosylation factor-like protein 4D (ARL4D) from Bos taurus (Bovine).